The primary structure comprises 200 residues: Ribonuclease HII (200 aa).

The RNase H type-2 domain occupies 1-200 (MRYGGVDEAG…EINKKLTDFI (200 aa)). 3 residues coordinate a divalent metal cation: Asp-7, Glu-8, and Asp-99.

It belongs to the RNase HII family. Mn(2+) serves as cofactor. It depends on Mg(2+) as a cofactor.

The protein localises to the cytoplasm. The enzyme catalyses Endonucleolytic cleavage to 5'-phosphomonoester.. In terms of biological role, endonuclease that specifically degrades the RNA of RNA-DNA hybrids. This Nanoarchaeum equitans (strain Kin4-M) protein is Ribonuclease HII.